We begin with the raw amino-acid sequence, 930 residues long: Isoleucine--tRNA ligase (930 aa).

The short motif at 57–67 (PYANGNIHVGH) is the 'HIGH' region element. Glu-554 provides a ligand contact to L-isoleucyl-5'-AMP. The 'KMSKS' region motif lies at 595-599 (KMSKS). Lys-598 is an ATP binding site.

Belongs to the class-I aminoacyl-tRNA synthetase family. IleS type 1 subfamily. In terms of assembly, monomer.

It is found in the cytoplasm. It carries out the reaction tRNA(Ile) + L-isoleucine + ATP = L-isoleucyl-tRNA(Ile) + AMP + diphosphate. Catalyzes the attachment of isoleucine to tRNA(Ile). As IleRS can inadvertently accommodate and process structurally similar amino acids such as valine, to avoid such errors it has two additional distinct tRNA(Ile)-dependent editing activities. One activity is designated as 'pretransfer' editing and involves the hydrolysis of activated Val-AMP. The other activity is designated 'posttransfer' editing and involves deacylation of mischarged Val-tRNA(Ile). The sequence is that of Isoleucine--tRNA ligase from Streptococcus agalactiae serotype Ia (strain ATCC 27591 / A909 / CDC SS700).